Here is a 521-residue protein sequence, read N- to C-terminus: Adenosylhomocysteinase-like 1 (521 aa).

The disordered stretch occupies residues 1 to 92 (MNNLADTVVV…EKVQKNSKGS (92 aa)). Residues 54–73 (RSLSASSTDSFSSASYTGSS) are compositionally biased toward low complexity. Positions 220 and 245 each coordinate substrate. 246–248 (SVT) contacts NAD(+). Substrate is bound by residues K275 and D279. NAD(+) is bound by residues 311-316 (GDVGKG), E332, 388-390 (MGH), N435, K515, 515-519 (KPNYY), and Y519.

This sequence belongs to the adenosylhomocysteinase family. Interacts with Ahcy; the interaction may negatively regulate Ahcy catalytic activity. NAD(+) is required as a cofactor.

Its function is as follows. Might play a role in the regulation of methionine metabolism possibly by binding and inactivating Ahcy. This is Adenosylhomocysteinase-like 1 from Drosophila melanogaster (Fruit fly).